Here is a 312-residue protein sequence, read N- to C-terminus: Malate dehydrogenase (312 aa).

NAD(+) is bound by residues 7 to 13 (GAAGGIG) and aspartate 34. Substrate-binding residues include arginine 81 and arginine 87. NAD(+)-binding positions include asparagine 94 and 117-119 (ITN). Positions 119 and 153 each coordinate substrate. Histidine 177 serves as the catalytic Proton acceptor. Methionine 227 is a binding site for NAD(+).

This sequence belongs to the LDH/MDH superfamily. MDH type 1 family. Homodimer.

It carries out the reaction (S)-malate + NAD(+) = oxaloacetate + NADH + H(+). Functionally, catalyzes the reversible oxidation of malate to oxaloacetate. The chain is Malate dehydrogenase from Citrobacter koseri (strain ATCC BAA-895 / CDC 4225-83 / SGSC4696).